The sequence spans 178 residues: 2-C-methyl-D-erythritol 2,4-cyclodiphosphate synthase (178 aa).

3 residues coordinate a divalent metal cation: aspartate 24, histidine 26, and histidine 61. Position 24–26 (aspartate 24–histidine 26) interacts with 4-CDP-2-C-methyl-D-erythritol 2-phosphate. Threonine 150–glutamate 153 serves as a coordination point for 4-CDP-2-C-methyl-D-erythritol 2-phosphate.

It belongs to the IspF family. As to quaternary structure, homotrimer. The cofactor is a divalent metal cation.

The catalysed reaction is 4-CDP-2-C-methyl-D-erythritol 2-phosphate = 2-C-methyl-D-erythritol 2,4-cyclic diphosphate + CMP. It participates in isoprenoid biosynthesis; isopentenyl diphosphate biosynthesis via DXP pathway; isopentenyl diphosphate from 1-deoxy-D-xylulose 5-phosphate: step 4/6. Functionally, involved in the biosynthesis of isopentenyl diphosphate (IPP) and dimethylallyl diphosphate (DMAPP), two major building blocks of isoprenoid compounds. Catalyzes the conversion of 4-diphosphocytidyl-2-C-methyl-D-erythritol 2-phosphate (CDP-ME2P) to 2-C-methyl-D-erythritol 2,4-cyclodiphosphate (ME-CPP) with a corresponding release of cytidine 5-monophosphate (CMP). The sequence is that of 2-C-methyl-D-erythritol 2,4-cyclodiphosphate synthase from Chlamydia trachomatis serovar L2b (strain UCH-1/proctitis).